The following is a 308-amino-acid chain: Bifunctional protein FolD (308 aa).

Residues 171–173 (GRS), S198, and I239 each bind NADP(+).

It belongs to the tetrahydrofolate dehydrogenase/cyclohydrolase family. Homodimer.

The catalysed reaction is (6R)-5,10-methylene-5,6,7,8-tetrahydrofolate + NADP(+) = (6R)-5,10-methenyltetrahydrofolate + NADPH. The enzyme catalyses (6R)-5,10-methenyltetrahydrofolate + H2O = (6R)-10-formyltetrahydrofolate + H(+). Its pathway is one-carbon metabolism; tetrahydrofolate interconversion. Its function is as follows. Catalyzes the oxidation of 5,10-methylenetetrahydrofolate to 5,10-methenyltetrahydrofolate and then the hydrolysis of 5,10-methenyltetrahydrofolate to 10-formyltetrahydrofolate. The sequence is that of Bifunctional protein FolD from Borreliella burgdorferi (strain ZS7) (Borrelia burgdorferi).